Reading from the N-terminus, the 359-residue chain is 3-dehydroquinate synthase (359 aa).

Residues 69–74 (DAETGK), 103–107 (GAATD), 127–128 (TT), Lys140, and Lys149 contribute to the NAD(+) site. Residues Glu182, His244, and His260 each contribute to the Zn(2+) site.

The protein belongs to the sugar phosphate cyclases superfamily. Dehydroquinate synthase family. The cofactor is Co(2+). Zn(2+) is required as a cofactor. It depends on NAD(+) as a cofactor.

It localises to the cytoplasm. It catalyses the reaction 7-phospho-2-dehydro-3-deoxy-D-arabino-heptonate = 3-dehydroquinate + phosphate. It functions in the pathway metabolic intermediate biosynthesis; chorismate biosynthesis; chorismate from D-erythrose 4-phosphate and phosphoenolpyruvate: step 2/7. In terms of biological role, catalyzes the conversion of 3-deoxy-D-arabino-heptulosonate 7-phosphate (DAHP) to dehydroquinate (DHQ). This Corynebacterium diphtheriae (strain ATCC 700971 / NCTC 13129 / Biotype gravis) protein is 3-dehydroquinate synthase.